Reading from the N-terminus, the 567-residue chain is Lipase maturation factor 1 (567 aa).

Positions 1–39 (MRPDSPTMAAPAESLRRRKTGYSDPEPESPPAPGRGPAG) are disordered. Topologically, residues 1–49 (MRPDSPTMAAPAESLRRRKTGYSDPEPESPPAPGRGPAGSPAHLHTGTF) are cytoplasmic. The chain crosses the membrane as a helical span at residues 50-72 (WLTRIVLLKALAFVYFVAFLVAF). Topologically, residues 73-127 (HQNKQLIGDRGLLPCRVFLKNFQQYFQDRTSWEVFSYMPTILWLMDWSDMNSNLD) are lumenal. The chain crosses the membrane as a helical span at residues 128–151 (LLALLGLGISSFVLITGCANMLLM). At 152–207 (AALWGLYMSLVNVGHVWYSFGWESQLLETGFLGIFLCPLWTLSRLPQHTPTSRIVL) the chain is on the cytoplasmic side. A helical transmembrane segment spans residues 208–221 (WGFRWLIFRIMLGA). Residues 222 to 292 (GLIKIRGDRC…LGRRACIIHG (71 aa)) lie on the Lumenal side of the membrane. The chain crosses the membrane as a helical span at residues 293 to 321 (VLQILFQAVLIVSGNLSFLNWLTMVPSLA). Residues 322 to 367 (CFDDATLGFLFPSGPGSLKDRVLQMQRDIRGARPEPRFGSVVRRAA) lie on the Cytoplasmic side of the membrane. A helical transmembrane segment spans residues 368 to 388 (NVSLGVLLAWLSVPVVLNLLS). Residues 389–567 (SRQVMNTHFN…DRGWPLPGPL (179 aa)) lie on the Lumenal side of the membrane.

This sequence belongs to the lipase maturation factor family. In terms of assembly, interacts with LPL and SEL1L.

The protein resides in the endoplasmic reticulum membrane. Involved in the maturation of specific proteins in the endoplasmic reticulum. Required for maturation and transport of active lipoprotein lipase (LPL) through the secretory pathway. Each LMF1 molecule chaperones 50 or more molecules of LPL. The chain is Lipase maturation factor 1 (LMF1) from Homo sapiens (Human).